A 192-amino-acid polypeptide reads, in one-letter code: Vascular endothelial growth factor A (192 aa).

The signal sequence occupies residues 1-26; it reads MNFLLSWIHWGLAALLYFHNAKVLQA. 3 disulfide bridges follow: Cys-52–Cys-94, Cys-83–Cys-128, and Cys-87–Cys-130. The N-linked (GlcNAc...) asparagine glycan is linked to Asn-101.

This sequence belongs to the PDGF/VEGF growth factor family. As to quaternary structure, homodimer; disulfide-linked. Also found as heterodimer with PGF Interacts with FLT1/VEGFR1 and KDR/VEGFR2 receptors, heparan sulfate and heparin. Expressed by the venom gland, and probably other tissues.

It is found in the secreted. Its function is as follows. Growth factor active in angiogenesis, vasculogenesis and endothelial cell growth. Induces endothelial cell proliferation, promotes cell migration, inhibits apoptosis and induces permeabilization of blood vessels. The chain is Vascular endothelial growth factor A from Vipera ammodytes ammodytes (Western sand viper).